The sequence spans 132 residues: uncharacterized protein (132 aa).

Helical transmembrane passes span 28–48 (LLRL…LIYP), 59–79 (ILPS…LFSY), and 106–126 (LLVA…VIEI).

Its subcellular location is the membrane. This is an uncharacterized protein from Schizosaccharomyces pombe (strain 972 / ATCC 24843) (Fission yeast).